The chain runs to 341 residues: BBSome complex member BBS5 (341 aa).

The protein belongs to the BBS5 family. As to quaternary structure, part of BBSome complex, that contains BBS1, BBS2, BBS4, BBS5, BBS7, BBS8/TTC8, BBS9 and BBIP10. Binds to phosphoinositides. Interacts with CCDC28B. Interacts with SMO; the interaction is indicative for the association of SMO with the BBsome complex to facilitate ciliary localization of SMO. Interacts with PKD1. Interacts with DLEC1.

Its subcellular location is the cell projection. It is found in the cilium membrane. It localises to the cytoplasm. The protein localises to the cytoskeleton. The protein resides in the cilium basal body. Its subcellular location is the microtubule organizing center. It is found in the centrosome. It localises to the centriolar satellite. Functionally, the BBSome complex is thought to function as a coat complex required for sorting of specific membrane proteins to the primary cilia. The BBSome complex is required for ciliogenesis but is dispensable for centriolar satellite function. This ciliogenic function is mediated in part by the Rab8 GDP/GTP exchange factor, which localizes to the basal body and contacts the BBSome. Rab8(GTP) enters the primary cilium and promotes extension of the ciliary membrane. Firstly the BBSome associates with the ciliary membrane and binds to RAB3IP/Rabin8, the guanosyl exchange factor (GEF) for Rab8 and then the Rab8-GTP localizes to the cilium and promotes docking and fusion of carrier vesicles to the base of the ciliary membrane. The BBSome complex, together with the LTZL1, controls SMO ciliary trafficking and contributes to the sonic hedgehog (SHH) pathway regulation. Required for BBSome complex ciliary localization but not for the proper complex assembly. The protein is BBSome complex member BBS5 (BBS5) of Homo sapiens (Human).